Consider the following 357-residue polypeptide: Eukaryotic translation initiation factor 3 subunit F (357 aa).

Positions 1–82 are disordered; sequence MATPAVPVSA…PAPALPGPAL (82 aa). Ala-2 is subject to N-acetylalanine. The segment covering 9–36 has biased composition (pro residues); that stretch reads SAPPATPTPVPAAAPASVPAPTPAPAAA. Residues 37–74 are compositionally biased toward low complexity; the sequence is PVPAAAPASSSDPAAAAAATAAPGQTPASAQAPAQTPA. The residue at position 46 (Ser-46) is a Phosphoserine; by CDK11; in vitro. The region spanning 92-222 is the MPN domain; it reads VRLHPVILAS…IKAYVSTLMG (131 aa). Lys-238 bears the N6-acetyllysine mark. Ser-258 bears the Phosphoserine mark.

Belongs to the eIF-3 subunit F family. In terms of assembly, component of the eukaryotic translation initiation factor 3 (eIF-3) complex, which is composed of 13 subunits: EIF3A, EIF3B, EIF3C, EIF3D, EIF3E, EIF3F, EIF3G, EIF3H, EIF3I, EIF3J, EIF3K, EIF3L and EIF3M. The eIF-3 complex appears to include 3 stable modules: module A is composed of EIF3A, EIF3B, EIF3G and EIF3I; module B is composed of EIF3F, EIF3H, and EIF3M; and module C is composed of EIF3C, EIF3D, EIF3E, EIF3K and EIF3L. EIF3C of module C binds EIF3B of module A and EIF3H of module B, thereby linking the three modules. EIF3J is a labile subunit that binds to the eIF-3 complex via EIF3B. The eIF-3 complex interacts with RPS6KB1 under conditions of nutrient depletion. Mitogenic stimulation leads to binding and activation of a complex composed of MTOR and RPTOR, leading to phosphorylation and release of RPS6KB1 and binding of EIF4B to eIF-3. Interacts with RNF139; the interaction leads to protein translation inhibitions in a ubiquitination-dependent manner. Interacts with DTX1, the interaction is required for deubiquitinating activity towards NOTCH1. Phosphorylation is enhanced upon serum stimulation. Phosphorylated during apoptosis by caspase-processed CDK11.

It localises to the cytoplasm. It catalyses the reaction Thiol-dependent hydrolysis of ester, thioester, amide, peptide and isopeptide bonds formed by the C-terminal Gly of ubiquitin (a 76-residue protein attached to proteins as an intracellular targeting signal).. In terms of biological role, component of the eukaryotic translation initiation factor 3 (eIF-3) complex, which is required for several steps in the initiation of protein synthesis. The eIF-3 complex associates with the 40S ribosome and facilitates the recruitment of eIF-1, eIF-1A, eIF-2:GTP:methionyl-tRNAi and eIF-5 to form the 43S pre-initiation complex (43S PIC). The eIF-3 complex stimulates mRNA recruitment to the 43S PIC and scanning of the mRNA for AUG recognition. The eIF-3 complex is also required for disassembly and recycling of post-termination ribosomal complexes and subsequently prevents premature joining of the 40S and 60S ribosomal subunits prior to initiation. The eIF-3 complex specifically targets and initiates translation of a subset of mRNAs involved in cell proliferation, including cell cycling, differentiation and apoptosis, and uses different modes of RNA stem-loop binding to exert either translational activation or repression. Its function is as follows. Deubiquitinates activated NOTCH1, promoting its nuclear import, thereby acting as a positive regulator of Notch signaling. The sequence is that of Eukaryotic translation initiation factor 3 subunit F from Homo sapiens (Human).